The sequence spans 540 residues: Threonine--tRNA ligase catalytic subunit (540 aa).

Positions 134 to 428 are catalytic; that stretch reads DHRIIGERLD…LLEHFRGKLP (295 aa). Residues Cys226, His277, and His405 each coordinate Zn(2+).

Belongs to the class-II aminoacyl-tRNA synthetase family. Homodimer. Probably interacts with its editing subunit. The cofactor is Zn(2+).

The protein resides in the cytoplasm. It carries out the reaction tRNA(Thr) + L-threonine + ATP = L-threonyl-tRNA(Thr) + AMP + diphosphate + H(+). In terms of biological role, catalyzes the attachment of threonine to tRNA(Thr) in a two-step reaction: L-threonine is first activated by ATP to form Thr-AMP and then transferred to the acceptor end of tRNA(Thr). Also activates L-serine and transfers it to tRNA(Thr) but cannot deacylate incorrectly charged amino acid; unlike most archaea the editing function is found in a freestanding protein. The sequence is that of Threonine--tRNA ligase catalytic subunit from Sulfurisphaera tokodaii (strain DSM 16993 / JCM 10545 / NBRC 100140 / 7) (Sulfolobus tokodaii).